Reading from the N-terminus, the 505-residue chain is Maturase K (505 aa).

It belongs to the intron maturase 2 family. MatK subfamily.

Its subcellular location is the plastid. It is found in the chloroplast. Usually encoded in the trnK tRNA gene intron. Probably assists in splicing its own and other chloroplast group II introns. This Allamanda cathartica (Yellow allamanda) protein is Maturase K.